We begin with the raw amino-acid sequence, 136 residues long: Large ribosomal subunit protein bL17 (136 aa).

Belongs to the bacterial ribosomal protein bL17 family. As to quaternary structure, part of the 50S ribosomal subunit. Contacts protein L32.

This is Large ribosomal subunit protein bL17 from Rickettsia prowazekii (strain Madrid E).